Reading from the N-terminus, the 221-residue chain is Oxaloacetate tautomerase FAHD1, mitochondrial (221 aa).

The transit peptide at 1 to 24 (MAASRPLSRFWEWGKNIVCVGRNY) directs the protein to the mitochondrion. Position 37 is a phosphoserine (Ser37). The Mg(2+) site is built by Glu68, Glu70, and Asp99. Residue Lys110 is modified to N6-acetyllysine. Lys112 is subject to N6-succinyllysine.

This sequence belongs to the FAH family. In terms of assembly, homodimer. The cofactor is Mg(2+). It depends on Mn(2+) as a cofactor.

The protein resides in the mitochondrion. It localises to the cytoplasm. Its subcellular location is the cytosol. The catalysed reaction is oxaloacetate = enol-oxaloacetate. It carries out the reaction oxaloacetate + H(+) = pyruvate + CO2. The enzyme catalyses a 3-acylpyruvate + H2O = a carboxylate + pyruvate + H(+). It catalyses the reaction acetylpyruvate + H2O = acetate + pyruvate + H(+). The catalysed reaction is 3-fumarylpyruvate + H2O = fumarate + pyruvate + H(+). Oxaloacetate decarboxylation is competitively inhibited by oxalate. Functionally, tautomerase that converts enol-oxaloacetate, a strong inhibitor of succinate dehydrogenase, to the physiological keto form of oxaloacetate. It is thereby required to maximize aerobic respiration efficiency by preventing succinate dehydrogenase inhibition. Also acts as a weak oxaloacetate decarboxylase (ODx), catalyzing the decarboxylation of oxaloacetate (OAA) to pyruvate and CO(2), and as such is likely a regulatory enzyme in the TCA cycle. Also displays acylpyruvase activity, being able to hydrolyze acetylpyruvate and fumarylpyruvate in vitro. This is Oxaloacetate tautomerase FAHD1, mitochondrial (FAHD1) from Pongo abelii (Sumatran orangutan).